Reading from the N-terminus, the 300-residue chain is MKRGHDYSSSDSELDENIEVEKESADENGNLSSAAGSMSPSTSSQILARKRRRGIIEKRRRDRINNSLSELRRLVPSAFEKQGSAKLEKAEILQMTVDHLKMLHTAGGKGYFDAHALAMDYRSLGFRECLAEVARYLSIIEGMDTTDPLRVRLVSHLNNYASQREAANTAHTGIGHIPWGGTFAHHPHLSHPLLLAQTAHTSANSTSSSTEAHHQNRLPGSPHAETSSLRVPPNGNIASVLPVVASSKLSPPLLSSMASLSAFPFSFGSFHLLSPNSLSPTTPTPSGKPYRPWGTEIGAF.

The disordered stretch occupies residues 1 to 52; sequence MKRGHDYSSSDSELDENIEVEKESADENGNLSSAAGSMSPSTSSQILARKRR. Low complexity predominate over residues 32-44; the sequence is SSAAGSMSPSTSS. Residues 48–103 enclose the bHLH domain; it reads ARKRRRGIIEKRRRDRINNSLSELRRLVPSAFEKQGSAKLEKAEILQMTVDHLKML. An Orange domain is found at 121–157; it reads YRSLGFRECLAEVARYLSIIEGMDTTDPLRVRLVSHL. The span at 199 to 210 shows a compositional bias: low complexity; that stretch reads AHTSANSTSSST. 2 disordered regions span residues 199–232 and 278–300; these read AHTSANSTSSSTEAHHQNRLPGSPHAETSSLRVP and LSPTTPTPSGKPYRPWGTEIGAF. The short motif at 290–293 is the YRPW motif element; it reads YRPW.

Belongs to the HEY family. In terms of assembly, efficient DNA binding requires dimerization with another bHLH protein. Binds DNA in the form of homodimer or more strongly as a heterodimer with hes1/hairy1 or hes4/hairy2b. Also weakly interacts with the bHLH proteins hes2, neurod1 and neurod4/ath3. Interacts (via Orange domain) with ccdc89/boip (via C-terminus).

Its subcellular location is the nucleus. Functionally, downstream effector of Notch signaling. Transcriptional repressor which binds preferentially to the canonical E box sequence 5'-CACGTG-3'. Acts as a suppressor of neurogenesis by antagonizing proneural gene function. Functions during floorplate development. Plays a role in pronephros formation in the inhibition of distal tubule and duct cell fates and the promotion of glomus and proximal tubule formation. The sequence is that of Hairy/enhancer-of-split related with YRPW motif protein 1 (hey1) from Xenopus tropicalis (Western clawed frog).